Reading from the N-terminus, the 88-residue chain is L-amino-acid oxidase (88 aa).

FAD is bound by residues Glu-74 and 81–86; that span reads GWIDST. 81–82 lines the substrate pocket; that stretch reads GW.

Belongs to the flavin monoamine oxidase family. FIG1 subfamily. As to quaternary structure, homodimer; non-covalently linked. Requires FAD as cofactor. N-glycosylated. As to expression, expressed by the venom gland.

It is found in the secreted. The catalysed reaction is an L-alpha-amino acid + O2 + H2O = a 2-oxocarboxylate + H2O2 + NH4(+). It carries out the reaction L-leucine + O2 + H2O = 4-methyl-2-oxopentanoate + H2O2 + NH4(+). It catalyses the reaction L-phenylalanine + O2 + H2O = 3-phenylpyruvate + H2O2 + NH4(+). The enzyme catalyses L-tryptophan + O2 + H2O = indole-3-pyruvate + H2O2 + NH4(+). The catalysed reaction is L-methionine + O2 + H2O = 4-methylsulfanyl-2-oxobutanoate + H2O2 + NH4(+). It carries out the reaction L-isoleucine + O2 + H2O = (S)-3-methyl-2-oxopentanoate + H2O2 + NH4(+). It catalyses the reaction L-arginine + O2 + H2O = 5-guanidino-2-oxopentanoate + H2O2 + NH4(+). The enzyme catalyses L-histidine + O2 + H2O = 3-(imidazol-5-yl)pyruvate + H2O2 + NH4(+). The catalysed reaction is L-asparagine + O2 + H2O = 2-oxosuccinamate + H2O2 + NH4(+). It carries out the reaction L-valine + O2 + H2O = 3-methyl-2-oxobutanoate + H2O2 + NH4(+). It catalyses the reaction L-glutamate + O2 + H2O = H2O2 + 2-oxoglutarate + NH4(+). Functionally, catalyzes an oxidative deamination of predominantly hydrophobic and aromatic L-amino acids, thus producing hydrogen peroxide that may contribute to the diverse toxic effects of this enzyme. Is highly active on L-Met, L-Leu, L-Phe, L-Ile, and L-Arg, moderately active on L-His, L-Trp, L-Asn, L-Glu, and L-Val, and weakly or not active on L-Gln, L-Lys, L-Asp, L-Ala, L-Tyr, L-Ser, L-Pro, L-Gly, L-Thr, and L-Cys. Exhibits diverse biological activities, such as hemorrhage, hemolysis, edema, apoptosis of vascular endothelial cells or tumor cell lines, antibacterial and antiparasitic activities. In addition, this protein has an ability to induce apoptosis in cultured HeLa and K562 cells, and inhibits ADP-induced platelet aggregation dose-dependently. Effects of snake L-amino oxidases on platelets are controversial, since they either induce aggregation or inhibit agonist-induced aggregation. These different effects are probably due to different experimental conditions. This is L-amino-acid oxidase from Vipera berus berus (Common viper).